The primary structure comprises 239 residues: tRNA1(Val) (adenine(37)-N6)-methyltransferase (239 aa).

Belongs to the methyltransferase superfamily. tRNA (adenine-N(6)-)-methyltransferase family.

It is found in the cytoplasm. The enzyme catalyses adenosine(37) in tRNA1(Val) + S-adenosyl-L-methionine = N(6)-methyladenosine(37) in tRNA1(Val) + S-adenosyl-L-homocysteine + H(+). Specifically methylates the adenine in position 37 of tRNA(1)(Val) (anticodon cmo5UAC). This is tRNA1(Val) (adenine(37)-N6)-methyltransferase from Vibrio vulnificus (strain CMCP6).